The sequence spans 778 residues: Exo-beta-D-glucosaminidase (778 aa).

Substrate-binding positions include Y55, G104–E105, D180–E181, E308, E349, and Y381. The Proton donor role is filled by E181. E349 acts as the Nucleophile in catalysis.

Belongs to the glycosyl hydrolase 35 family. In terms of assembly, homodimer.

The protein localises to the cytoplasm. It catalyses the reaction beta-D-glucosaminyl-(1-&gt;4)-N-acetyl-D-glucosamine + H2O = D-glucosamine + N-acetyl-D-glucosamine. Its pathway is glycan degradation; chitin degradation. Exo-type enzyme that specifically cleaves the non-reducing terminal glycosidic bond of chitooligosaccharides. Catalyzes the hydrolysis of GlcN-GlcNAc to glucosamine (GlcN) and N-acetylglucosamine (GlcNAc). Involved in chitin degradation. Can also hydrolyze chitosan and chitooligosaccharides of various chain lengths. In Pyrococcus horikoshii (strain ATCC 700860 / DSM 12428 / JCM 9974 / NBRC 100139 / OT-3), this protein is Exo-beta-D-glucosaminidase.